The sequence spans 576 residues: Proline--tRNA ligase (576 aa).

It belongs to the class-II aminoacyl-tRNA synthetase family. ProS type 1 subfamily. Homodimer.

Its subcellular location is the cytoplasm. The catalysed reaction is tRNA(Pro) + L-proline + ATP = L-prolyl-tRNA(Pro) + AMP + diphosphate. Its function is as follows. Catalyzes the attachment of proline to tRNA(Pro) in a two-step reaction: proline is first activated by ATP to form Pro-AMP and then transferred to the acceptor end of tRNA(Pro). As ProRS can inadvertently accommodate and process non-cognate amino acids such as alanine and cysteine, to avoid such errors it has two additional distinct editing activities against alanine. One activity is designated as 'pretransfer' editing and involves the tRNA(Pro)-independent hydrolysis of activated Ala-AMP. The other activity is designated 'posttransfer' editing and involves deacylation of mischarged Ala-tRNA(Pro). The misacylated Cys-tRNA(Pro) is not edited by ProRS. This is Proline--tRNA ligase from Bordetella pertussis (strain Tohama I / ATCC BAA-589 / NCTC 13251).